The primary structure comprises 288 residues: ATP synthase gamma chain (288 aa).

This sequence belongs to the ATPase gamma chain family. In terms of assembly, F-type ATPases have 2 components, CF(1) - the catalytic core - and CF(0) - the membrane proton channel. CF(1) has five subunits: alpha(3), beta(3), gamma(1), delta(1), epsilon(1). CF(0) has three main subunits: a, b and c.

The protein resides in the cell inner membrane. Its function is as follows. Produces ATP from ADP in the presence of a proton gradient across the membrane. The gamma chain is believed to be important in regulating ATPase activity and the flow of protons through the CF(0) complex. This is ATP synthase gamma chain from Vibrio cholerae serotype O1 (strain ATCC 39541 / Classical Ogawa 395 / O395).